A 338-amino-acid chain; its full sequence is Phosphoribosylformylglycinamidine cyclo-ligase (338 aa).

Belongs to the AIR synthase family.

The protein resides in the cytoplasm. The catalysed reaction is 2-formamido-N(1)-(5-O-phospho-beta-D-ribosyl)acetamidine + ATP = 5-amino-1-(5-phospho-beta-D-ribosyl)imidazole + ADP + phosphate + H(+). It functions in the pathway purine metabolism; IMP biosynthesis via de novo pathway; 5-amino-1-(5-phospho-D-ribosyl)imidazole from N(2)-formyl-N(1)-(5-phospho-D-ribosyl)glycinamide: step 2/2. The chain is Phosphoribosylformylglycinamidine cyclo-ligase from Lactococcus lactis subsp. lactis (strain IL1403) (Streptococcus lactis).